A 169-amino-acid polypeptide reads, in one-letter code: Large ribosomal subunit protein uL18 (169 aa).

Belongs to the universal ribosomal protein uL18 family. Part of the 50S ribosomal subunit. Contacts the 5S and 23S rRNAs.

Its function is as follows. This is one of the proteins that bind and probably mediate the attachment of the 5S RNA into the large ribosomal subunit, where it forms part of the central protuberance. The protein is Large ribosomal subunit protein uL18 of Methanothrix thermoacetophila (strain DSM 6194 / JCM 14653 / NBRC 101360 / PT) (Methanosaeta thermophila).